The primary structure comprises 59 residues: MAVPKKKTSNSKRDSRRAHWNRKANLAAQRALSTGKSILTGRAKGFEYPTKDDDEDDDE.

The segment covering 1 to 22 (MAVPKKKTSNSKRDSRRAHWNR) has biased composition (basic residues). A disordered region spans residues 1–59 (MAVPKKKTSNSKRDSRRAHWNRKANLAAQRALSTGKSILTGRAKGFEYPTKDDDEDDDE).

It belongs to the bacterial ribosomal protein bL32 family.

In Acaryochloris marina (strain MBIC 11017), this protein is Large ribosomal subunit protein bL32.